Here is a 560-residue protein sequence, read N- to C-terminus: MSQKLMFLFTLACLSSLPSPFISAQIPAIGNATSPSNICRFAPDPSYCRSVLPNQPGDIYSYGRLSLRRSLSRARRFISMIDAELDRKGKVAAKSTVGALEDCKFLASLTMDYLLSSSQTADSTKTLSLSRAEDVHTFLSAAITNEQTCLEGLKSTASENGLSGDLFNDTKLYGVSLALFSKGWVPRRQRSRPIWQPQARFKKFFGFRNGKLPLKMTERARAVYNTVTRRKLLQSDADAVQVSDIVTVIQNGTGNFTTINAAIAAAPNKTDGSNGYFLIYVTAGLYEEYVEVPKNKRYVMMIGDGINQTVITGNRSVVDGWTTFNSATFILSGPNFIGVNITIRNTAGPTKGQAVALRSGGDLSVFYSCSFEAYQDTLYTHSLRQFYRECDVYGTVDFIFGNAAVVLQNCNLYPRQPRKGQSNEVTAQGRTDPNQNTGTAIHGCTIRPADDLATSNYTVKTYLGRPWKEYSRTVVMQTYIDGFLEPSGWNAWSGDFALSTLYYAEYNNTGPGSDTTNRVTWPGYHVINATDASNFTVTNFLVGEGWIGQTGVPFVGGLIA.

The N-terminal stretch at 1–24 (MSQKLMFLFTLACLSSLPSPFISA) is a signal peptide. Residues 25-179 (QIPAIGNATS…TKLYGVSLAL (155 aa)) form a pectinesterase inhibitor 20 region. Residues Asn31, Asn168, Asn251, Asn255, Asn268, Asn307, and Asn314 are each glycosylated (N-linked (GlcNAc...) asparagine). The interval 246–544 (VTVIQNGTGN…FTVTNFLVGE (299 aa)) is pectinesterase 20. Thr323 contacts substrate. Asn340 is a glycosylation site (N-linked (GlcNAc...) asparagine). Gln353 contacts substrate. Asp376 acts as the Proton donor; for pectinesterase activity in catalysis. Cysteines 390 and 410 form a disulfide. The Nucleophile; for pectinesterase activity role is filled by Asp397. The tract at residues 417-441 (PRKGQSNEVTAQGRTDPNQNTGTAI) is disordered. Residues 419–439 (KGQSNEVTAQGRTDPNQNTGT) show a composition bias toward polar residues. Residue Asn456 is glycosylated (N-linked (GlcNAc...) asparagine). Substrate-binding residues include Arg465 and Trp467. 3 N-linked (GlcNAc...) asparagine glycosylation sites follow: Asn507, Asn528, and Asn534.

The protein in the N-terminal section; belongs to the PMEI family. In the C-terminal section; belongs to the pectinesterase family. Expressed in flower buds.

It localises to the secreted. The protein resides in the cell wall. The enzyme catalyses [(1-&gt;4)-alpha-D-galacturonosyl methyl ester](n) + n H2O = [(1-&gt;4)-alpha-D-galacturonosyl](n) + n methanol + n H(+). It functions in the pathway glycan metabolism; pectin degradation; 2-dehydro-3-deoxy-D-gluconate from pectin: step 1/5. Acts in the modification of cell walls via demethylesterification of cell wall pectin. In Arabidopsis thaliana (Mouse-ear cress), this protein is Probable pectinesterase/pectinesterase inhibitor 20 (PME20).